We begin with the raw amino-acid sequence, 188 residues long: MVHYKLMCFDVRGLGEVIRQLFYLGDVSFEDFRVSREEFKSLKSNLPSGQLPVLEIDGVMISQSASIGRFLARQYGYSGKTPTEEMQVDSIIDLFKDFMLTFRQFFFAVIHGYPEYEKERMKRDIVKPAIKNYFIALNKILLRSKSGFLVGDDLTWADLQIADNLSTLINIRLFAEKEPHLNVFIRKL.

The 78-residue stretch at 2–79 (VHYKLMCFDV…FLARQYGYSG (78 aa)) folds into the GST N-terminal domain. Glutathione is bound by residues K43, 49 to 51 (GQL), and 63 to 64 (QS). A GST C-terminal domain is found at 81–188 (TPTEEMQVDS…PHLNVFIRKL (108 aa)).

Belongs to the GST superfamily. Sigma family.

It carries out the reaction RX + glutathione = an S-substituted glutathione + a halide anion + H(+). In terms of biological role, conjugation of reduced glutathione to a wide number of exogenous and endogenous hydrophobic electrophiles. This Caenorhabditis elegans protein is Glutathione S-transferase 2 (gst-2).